The primary structure comprises 394 residues: Elongation factor Tu 2 (394 aa).

In terms of domain architecture, tr-type G spans 10 to 204 (KPHVNVGTIG…YLDTYIPEPE (195 aa)). The interval 19 to 26 (GHVDHGKT) is G1. A GTP-binding site is contributed by 19–26 (GHVDHGKT). A Mg(2+)-binding site is contributed by threonine 26. The G2 stretch occupies residues 60–64 (GITIN). Positions 81-84 (DCPG) are G3. GTP contacts are provided by residues 81 to 85 (DCPGH) and 136 to 139 (NKCD). A G4 region spans residues 136 to 139 (NKCD). The interval 174–176 (SAL) is G5.

This sequence belongs to the TRAFAC class translation factor GTPase superfamily. Classic translation factor GTPase family. EF-Tu/EF-1A subfamily. In terms of assembly, monomer.

The protein localises to the cytoplasm. It catalyses the reaction GTP + H2O = GDP + phosphate + H(+). In terms of biological role, GTP hydrolase that promotes the GTP-dependent binding of aminoacyl-tRNA to the A-site of ribosomes during protein biosynthesis. The protein is Elongation factor Tu 2 of Yersinia enterocolitica serotype O:8 / biotype 1B (strain NCTC 13174 / 8081).